We begin with the raw amino-acid sequence, 163 residues long: NADH-quinone oxidoreductase subunit I (163 aa).

4Fe-4S ferredoxin-type domains are found at residues 53–83 (LRRY…IEAG) and 94–123 (VRYD…EGPN). 8 residues coordinate [4Fe-4S] cluster: C63, C66, C69, C73, C103, C106, C109, and C113.

It belongs to the complex I 23 kDa subunit family. NDH-1 is composed of 14 different subunits. Subunits NuoA, H, J, K, L, M, N constitute the membrane sector of the complex. [4Fe-4S] cluster serves as cofactor.

It localises to the cell inner membrane. The catalysed reaction is a quinone + NADH + 5 H(+)(in) = a quinol + NAD(+) + 4 H(+)(out). Functionally, NDH-1 shuttles electrons from NADH, via FMN and iron-sulfur (Fe-S) centers, to quinones in the respiratory chain. The immediate electron acceptor for the enzyme in this species is believed to be ubiquinone. Couples the redox reaction to proton translocation (for every two electrons transferred, four hydrogen ions are translocated across the cytoplasmic membrane), and thus conserves the redox energy in a proton gradient. This chain is NADH-quinone oxidoreductase subunit I, found in Bartonella quintana (strain Toulouse) (Rochalimaea quintana).